A 217-amino-acid polypeptide reads, in one-letter code: Fucoxanthin-chlorophyll a-c binding protein B, chloroplastic (217 aa).

A chloroplast-targeting transit peptide spans 1-39 (MKSAVMAVACAAAPGFRGPSAFNGAALTTSAKACSAMKM). Helical transmembrane passes span 81–101 (IAML…PGML), 122–142 (IPPA…LAVM), and 183–203 (GRAA…NNKP).

The protein belongs to the fucoxanthin chlorophyll protein family. In terms of assembly, the LHC complex of chromophytic algae is composed of fucoxanthin, chlorophyll A and C bound non-covalently by fucoxanthin chlorophyll proteins (FCPs). The ratio of pigments in this LHC is; fucoxanthin: chlorophyll C: chlorophyll A; (0.6-1): (0.1-0.3): (1).

It localises to the plastid. The protein localises to the chloroplast thylakoid membrane. Its function is as follows. The light-harvesting complex (LHC) functions as a light receptor, it captures and delivers excitation energy to photosystems with which it is closely associated. Energy is transferred from the carotenoid and chlorophyll C (or B) to chlorophyll A and the photosynthetic reaction centers where it is used to synthesize ATP and reducing power. The polypeptide is Fucoxanthin-chlorophyll a-c binding protein B, chloroplastic (FCPB) (Macrocystis pyrifera (Giant kelp)).